A 198-amino-acid chain; its full sequence is Recombination protein RecR (198 aa).

The C4-type zinc finger occupies 57–72 (CRVCANIADENPCGIC). The 96-residue stretch at 80-175 (GLICVVERPR…RVTRLAFGLP (96 aa)) folds into the Toprim domain.

It belongs to the RecR family.

Its function is as follows. May play a role in DNA repair. It seems to be involved in an RecBC-independent recombinational process of DNA repair. It may act with RecF and RecO. This Desulforudis audaxviator (strain MP104C) protein is Recombination protein RecR.